The chain runs to 104 residues: Glycine-rich protein (104 aa).

An N-terminal signal peptide occupies residues 1 to 18; it reads MKSMIAAILFALVATSLA.

Belongs to the non-disulfide-bridged peptide (NDBP) superfamily. Expressed by the venom gland.

It localises to the secreted. The polypeptide is Glycine-rich protein (Lychas mucronatus (Chinese swimming scorpion)).